The sequence spans 3623 residues: Cubilin (3623 aa).

The first 23 residues, 1-23 (MMNMSLPFLWSLLTLLIFAEVNG), serve as a signal peptide directing secretion. The propeptide at 24 to 35 (EAGELELQRQKR) is removed in mature form. The interaction with AMN stretch occupies residues 42–49 (PRMATERG). Asn105 is a glycosylation site (N-linked (GlcNAc...) asparagine). Residues 132–168 (DKKVCSSNPCQNGGTCLNLHDSFFCICPPQWKGPLCS) form the EGF-like 1 domain. Disulfide bonds link Cys136/Cys147, Cys141/Cys156, Cys158/Cys167, Cys174/Cys190, Cys184/Cys199, Cys201/Cys210, Cys267/Cys280, Cys274/Cys289, and Cys292/Cys303. An EGF-like 2; calcium-binding domain is found at 170 to 211 (DVNECEIYSGTPLSCQNGGTCVNTMGSYSCHCPPETYGPQCA). Residues 263–304 (DRDECSFQPGPCSTLVQCFNTQGSFYCGACPTGWQGNGYICE) enclose the EGF-like 3; calcium-binding domain. The 44-residue stretch at 305-348 (DINECEINNGGCSVAPPVECVNTPGSSHCQACPPGYQGDGRVCT) folds into the EGF-like 4; calcium-binding domain. EGF-like domains lie at 349-385 (LTDI…YTGN) and 395-430 (LSNI…VNCT). 13 disulfide bridges follow: Cys353–Cys366, Cys360–Cys376, Cys399–Cys409, Cys404–Cys418, Cys420–Cys429, Cys436–Cys447, Cys441–Cys456, Cys458–Cys467, Cys474–Cys500, Cys527–Cys549, Cys590–Cys616, Cys643–Cys665, and Cys708–Cys734. Asn428 carries an N-linked (GlcNAc...) asparagine glycan. The region spanning 432 to 468 (NINECLSNPCLNGGTCVDGVDSFSCECTRLWTGALCQ) is the EGF-like 7; calcium-binding domain. CUB domains are found at residues 474 to 586 (CGES…WETQ), 590 to 702 (CGGI…YLTS), 708 to 816 (CGGN…YQVA), 816 to 928 (ACGD…FSAE), 932 to 1042 (CGEI…YEAI), 1048 to 1161 (CLQD…WDGS), 1165 to 1277 (CGGN…YRQT), 1278 to 1389 (CENV…WFVY), 1391 to 1506 (CGGE…WQAV), 1510 to 1619 (CGGI…FRQA), 1620 to 1734 (CGGH…VTAS), 1738 to 1850 (CGGT…FMKI), 1852 to 1963 (GNDN…WFAV), 1978 to 2091 (CGGF…FHKS), 2092 to 2213 (CGGY…YEAK), 2217 to 2334 (CGGN…YSIA), 2336 to 2448 (CGGR…FESS), 2452 to 2565 (CGGD…YTSS), 2570 to 2687 (CGGS…YSFT), 2689 to 2801 (CGGI…WNTQ), 2805 to 2919 (CGGI…FVSR), 2920 to 3035 (CGSN…YRII), 3037 to 3150 (CGGV…FRQT), 3157 to 3274 (CGGY…YTIM), 3278 to 3393 (CGGT…YQIA), 3395 to 3507 (CNRD…WTSS), and 3511 to 3623 (CGGT…TWDS). Asn482 carries an N-linked (GlcNAc...) asparagine glycan. Asn711, Asn749, Asn781, and Asn857 each carry an N-linked (GlcNAc...) asparagine glycan. Intrachain disulfides connect Cys869/Cys891 and Cys932/Cys958. Residue Asn957 is glycosylated (N-linked (GlcNAc...) asparagine). Residue Glu980 participates in Ca(2+) binding. The N-linked (GlcNAc...) asparagine glycan is linked to Asn984. Cysteines 985 and 1005 form a disulfide. Positions 988, 1027, 1029, and 1030 each coordinate Ca(2+). A disulfide bridge connects residues Cys1048 and Cys1074. N-linked (GlcNAc...) asparagine glycosylation is present at Asn1092. The Ca(2+) site is built by Glu1096, Asp1105, Asp1146, Ile1148, and Asp1149. A disulfide bond links Cys1165 and Cys1191. Asn1168 is a glycosylation site (N-linked (GlcNAc...) asparagine). Position 1213 (Glu1213) interacts with Ca(2+). The N-linked (GlcNAc...) asparagine glycan is linked to Asn1217. The cysteines at positions 1218 and 1240 are disulfide-linked. Ca(2+) is bound by residues Asp1221, Asp1262, Gly1264, and Gln1265. Cys1278 and Cys1306 are disulfide-bonded. Asn1285, Asn1307, and Asn1319 each carry an N-linked (GlcNAc...) asparagine glycan. Residue Glu1328 participates in Ca(2+) binding. Residue Asn1332 is glycosylated (N-linked (GlcNAc...) asparagine). Cys1333 and Cys1351 form a disulfide bridge. Ca(2+) is bound by residues Asp1336, Asp1373, and Val1375. 2 cysteine pairs are disulfide-bonded: Cys1391–Cys1417 and Cys1444–Cys1466. Asn1500 is a glycosylation site (N-linked (GlcNAc...) asparagine). Cysteines 1510 and 1536 form a disulfide. An N-linked (GlcNAc...) asparagine glycan is attached at Asn1551. 5 cysteine pairs are disulfide-bonded: Cys1563/Cys1581, Cys1620/Cys1647, Cys1675/Cys1697, Cys1738/Cys1764, and Cys1791/Cys1812. A glycan (N-linked (GlcNAc...) asparagine) is linked at Asn1646. N-linked (GlcNAc...) asparagine glycosylation is found at Asn1802, Asn1819, and Asn1885. 3 disulfides stabilise this stretch: Cys1905-Cys1927, Cys1978-Cys2006, and Cys2032-Cys2054. N-linked (GlcNAc...) asparagine glycans are attached at residues Asn2085 and Asn2117. 2 cysteine pairs are disulfide-bonded: Cys2092–Cys2118 and Cys2217–Cys2247. Asn2274 carries N-linked (GlcNAc...) asparagine glycosylation. 2 disulfide bridges follow: Cys2275-Cys2297 and Cys2336-Cys2363. N-linked (GlcNAc...) asparagine glycosylation is found at Asn2386 and Asn2400. Intrachain disulfides connect Cys2390-Cys2411, Cys2452-Cys2478, and Cys2505-Cys2527. Residues Asn2531, Asn2581, Asn2592, and Asn2610 are each glycosylated (N-linked (GlcNAc...) asparagine). Cys2570 and Cys2599 are joined by a disulfide. Intrachain disulfides connect Cys2628/Cys2649, Cys2689/Cys2715, Cys2742/Cys2764, Cys2805/Cys2831, Cys2860/Cys2883, Cys2920/Cys2946, and Cys2977/Cys2999. A glycan (N-linked (GlcNAc...) asparagine) is linked at Asn2813. 2 N-linked (GlcNAc...) asparagine glycosylation sites follow: Asn2923 and Asn2945. Position 3008 is a phosphothreonine (Thr3008). 2 disulfides stabilise this stretch: Cys3037/Cys3064 and Cys3091/Cys3113. 4 N-linked (GlcNAc...) asparagine glycosylation sites follow: Asn3042, Asn3103, Asn3125, and Asn3165. 2 disulfides stabilise this stretch: Cys3157-Cys3185 and Cys3215-Cys3237. Residues Asn3268, Asn3283, Asn3290, and Asn3295 are each glycosylated (N-linked (GlcNAc...) asparagine). 2 disulfides stabilise this stretch: Cys3278–Cys3306 and Cys3332–Cys3354. Asn3357 is a glycosylation site (N-linked (GlcNAc...) asparagine). An intrachain disulfide couples Cys3395 to Cys3421. N-linked (GlcNAc...) asparagine glycans are attached at residues Asn3430, Asn3457, Asn3533, and Asn3576. Intrachain disulfides connect Cys3448–Cys3470, Cys3511–Cys3537, and Cys3564–Cys3586.

As to quaternary structure, interacts with AMN. Component of the cubam complex composed of one CUBN trimer and one AMN chain. The cubam complex can dimerize. Interacts with LRP2 in a dual-receptor complex in a calcium-dependent manner. Found in a complex with PID1/PCLI1, LRP1 and CUBNI. Interacts with LRP1 and PID1/PCLI1. The precursor is cleaved by a trans-Golgi proteinase furin, removing a propeptide. In terms of processing, N-glycosylated. Detected in kidney cortex (at protein level). Expressed in kidney proximal tubule cells, placenta, visceral yolk-sac cells and in absorptive intestinal cells. Expressed in the epithelium of intestine and kidney.

It is found in the apical cell membrane. The protein resides in the cell membrane. Its subcellular location is the membrane. It localises to the coated pit. The protein localises to the endosome. It is found in the lysosome membrane. Functionally, endocytic receptor which plays a role in lipoprotein, vitamin and iron metabolism by facilitating their uptake. Acts together with LRP2 to mediate endocytosis of high-density lipoproteins, GC, hemoglobin, ALB, TF and SCGB1A1. Acts together with AMN to mediate endocytosis of the CBLIF-cobalamin complex. Binds to ALB, MB, Kappa and lambda-light chains, TF, hemoglobin, GC, SCGB1A1, APOA1, high density lipoprotein, and the CBLIF-cobalamin complex. Ligand binding requires calcium. Serves as important transporter in several absorptive epithelia, including intestine, renal proximal tubules and embryonic yolk sac. May play an important role in the development of the peri-implantation embryo through internalization of APOA1 and cholesterol. Binds to LGALS3 at the maternal-fetal interface. The sequence is that of Cubilin (CUBN) from Homo sapiens (Human).